A 397-amino-acid chain; its full sequence is Cathepsin E (397 aa).

A signal peptide spans methionine 1 to glycine 16. Positions isoleucine 17–phenylalanine 49 are cleaved as a propeptide — activation peptide. The Peptidase A1 domain occupies tyrosine 74–alanine 385. Aspartate 92 is an active-site residue. A disulfide bridge connects residues cysteine 105 and cysteine 110. Asparagine 139 carries an N-linked (GlcNAc...) asparagine glycan. Cysteine 268 and cysteine 272 are joined by a disulfide. The active site involves aspartate 277. A disulfide bond links cysteine 310 and cysteine 344.

Belongs to the peptidase A1 family. In terms of assembly, homodimer; disulfide-linked. Glycosylated. Contains high mannose-type oligosaccharide. As to expression, found in the larval foregut and adult stomach.

The protein resides in the endosome. The enzyme catalyses Similar to cathepsin D, but slightly broader specificity.. Its function is as follows. May have a role in immune function. Probably involved in the processing of antigenic peptides during MHC class II-mediated antigen presentation. The polypeptide is Cathepsin E (CTSE) (Aquarana catesbeiana (American bullfrog)).